The following is a 598-amino-acid chain: MALRCPIVSVLGHVDHGKTSLLDKIRKTRVTQREAGGITQHIGASEIPIDIIKKISKDLIKMLGANLTIPGILVIDTPGHAAFTSLRKRGGALADIAVLIVDINEGFMPQTIEALNILKQNKTPFVVAANKIDRLPGWSSVDGAFITNFNEQKQHPNALTEFEIKLYENVIAPLAERGFEADLFSRVKDVSKTINIVPISAMTGEGIPDLLVMISGLAQRFMEQNLKLNVEGYAKGTVLEVKEERGLGKTMDAIIYDGVAKRGDYIVIGNPDGIVVSRIKALLKPKALDEMRDPRDKFKTMNEISAATGLKISAPDLDNIIAGSPLRIVPKNMVEQAKAEIVEEIEETAIQLDEEGIIIKADTLGSLEALATELRKVGAKIKKAEVGDVSKKDVIEASSYAQTNPLNGAIILFNSKLLADAKSEVEKYEIKTFEGDIIYKLVEDYEEWTKEMKELLKSDEFNRLTKPAILRIIPGCIFNKTKPAICGVEVVYGTLRVGCSVVDEQGKRLGTVKEIKDKKQENIKEAKVGMEVPISIDGTVILGRHIGEDDIMYVELPEPEVRILSHNYMGELRGDEREAFERYVELKRKLENNPFWGI.

The tr-type G domain occupies 3-223; it reads LRCPIVSVLG…ISGLAQRFME (221 aa). A G1 region spans residues 12 to 19; sequence GHVDHGKT. A GTP-binding site is contributed by 12–19; sequence GHVDHGKT. Residues 37–41 are G2; it reads GITQH. Residues 76-79 form a G3 region; the sequence is DTPG. Residues 76–80 and 130–133 contribute to the GTP site; these read DTPGH and NKID. Positions 130 to 133 are G4; the sequence is NKID. Residues 200 to 202 form a G5 region; it reads SAM.

Belongs to the TRAFAC class translation factor GTPase superfamily. Classic translation factor GTPase family. IF-2 subfamily.

Functionally, function in general translation initiation by promoting the binding of the formylmethionine-tRNA to ribosomes. Seems to function along with eIF-2. The polypeptide is Probable translation initiation factor IF-2 (Methanococcus aeolicus (strain ATCC BAA-1280 / DSM 17508 / OCM 812 / Nankai-3)).